The chain runs to 315 residues: Methionyl-tRNA formyltransferase (315 aa).

(6S)-5,6,7,8-tetrahydrofolate is bound at residue 113 to 116 (SLLP).

The protein belongs to the Fmt family.

It carries out the reaction L-methionyl-tRNA(fMet) + (6R)-10-formyltetrahydrofolate = N-formyl-L-methionyl-tRNA(fMet) + (6S)-5,6,7,8-tetrahydrofolate + H(+). In terms of biological role, attaches a formyl group to the free amino group of methionyl-tRNA(fMet). The formyl group appears to play a dual role in the initiator identity of N-formylmethionyl-tRNA by promoting its recognition by IF2 and preventing the misappropriation of this tRNA by the elongation apparatus. The protein is Methionyl-tRNA formyltransferase of Klebsiella pneumoniae subsp. pneumoniae (strain ATCC 700721 / MGH 78578).